Reading from the N-terminus, the 276-residue chain is tRNA dimethylallyltransferase (276 aa).

The segment at 9 to 12 is interaction with substrate tRNA; the sequence is DSLS.

The protein belongs to the IPP transferase family. In terms of assembly, monomer. Mg(2+) serves as cofactor.

The catalysed reaction is adenosine(37) in tRNA + dimethylallyl diphosphate = N(6)-dimethylallyladenosine(37) in tRNA + diphosphate. In terms of biological role, catalyzes the transfer of a dimethylallyl group onto the adenine at position 37 in tRNAs that read codons beginning with uridine, leading to the formation of N6-(dimethylallyl)adenosine (i(6)A). The polypeptide is tRNA dimethylallyltransferase (miaA) (Helicobacter pylori (strain G27)).